The following is a 358-amino-acid chain: UDP-N-acetylglucosamine--N-acetylmuramyl-(pentapeptide) pyrophosphoryl-undecaprenol N-acetylglucosamine transferase (358 aa).

UDP-N-acetyl-alpha-D-glucosamine contacts are provided by residues 11 to 13 (TGG), arginine 163, serine 191, isoleucine 245, and glutamine 290.

It belongs to the glycosyltransferase 28 family. MurG subfamily.

Its subcellular location is the cell inner membrane. The catalysed reaction is di-trans,octa-cis-undecaprenyl diphospho-N-acetyl-alpha-D-muramoyl-L-alanyl-D-glutamyl-meso-2,6-diaminopimeloyl-D-alanyl-D-alanine + UDP-N-acetyl-alpha-D-glucosamine = di-trans,octa-cis-undecaprenyl diphospho-[N-acetyl-alpha-D-glucosaminyl-(1-&gt;4)]-N-acetyl-alpha-D-muramoyl-L-alanyl-D-glutamyl-meso-2,6-diaminopimeloyl-D-alanyl-D-alanine + UDP + H(+). Its pathway is cell wall biogenesis; peptidoglycan biosynthesis. In terms of biological role, cell wall formation. Catalyzes the transfer of a GlcNAc subunit on undecaprenyl-pyrophosphoryl-MurNAc-pentapeptide (lipid intermediate I) to form undecaprenyl-pyrophosphoryl-MurNAc-(pentapeptide)GlcNAc (lipid intermediate II). The polypeptide is UDP-N-acetylglucosamine--N-acetylmuramyl-(pentapeptide) pyrophosphoryl-undecaprenol N-acetylglucosamine transferase (Herminiimonas arsenicoxydans).